A 362-amino-acid polypeptide reads, in one-letter code: D-alanine--D-alanine ligase (362 aa).

The 205-residue stretch at 153–357 (KKIAREAGIP…YADLLTTLVS (205 aa)) folds into the ATP-grasp domain. 180-235 (RELLGLPVFVKPARGGSSIGISKVDSWRDLPAAIEEAASHDPKVIIEAMITGPEVE) contacts ATP. 3 residues coordinate Mg(2+): Asp312, Glu324, and Asn326.

The protein belongs to the D-alanine--D-alanine ligase family. The cofactor is Mg(2+). Requires Mn(2+) as cofactor.

The protein resides in the cytoplasm. The enzyme catalyses 2 D-alanine + ATP = D-alanyl-D-alanine + ADP + phosphate + H(+). Its pathway is cell wall biogenesis; peptidoglycan biosynthesis. Cell wall formation. The sequence is that of D-alanine--D-alanine ligase from Corynebacterium urealyticum (strain ATCC 43042 / DSM 7109).